The sequence spans 259 residues: Uridylate kinase (259 aa).

10–13 provides a ligand contact to ATP; it reads KLSG. Gly52 serves as a coordination point for UMP. Residues Gly53 and Arg57 each coordinate ATP. UMP contacts are provided by residues Asp72 and 134–141; that span reads NGQPFLTT. Positions 168 and 171 each coordinate ATP. The tract at residues 236 to 259 is disordered; sequence ISSSPEKSEEFGNEVLASPAESTA.

The protein belongs to the UMP kinase family. In terms of assembly, homohexamer.

It localises to the cytoplasm. The enzyme catalyses UMP + ATP = UDP + ADP. It participates in pyrimidine metabolism; CTP biosynthesis via de novo pathway; UDP from UMP (UMPK route): step 1/1. With respect to regulation, inhibited by UTP. Functionally, catalyzes the reversible phosphorylation of UMP to UDP. The protein is Uridylate kinase of Frankia casuarinae (strain DSM 45818 / CECT 9043 / HFP020203 / CcI3).